Here is a 319-residue protein sequence, read N- to C-terminus: Polyprenal reductase (319 aa).

The Cytoplasmic segment spans residues 1–12; the sequence is MQLVQLLPPGVS. The helical transmembrane segment at 13–33 threads the bilayer; the sequence is LLALVWLAVDAAFLTALLLYL. The Lumenal segment spans residues 34–79; that stretch reads QRGCDSGRSLLCSVFQDLIRYGKTKSGLRRPSWLQWFDIPKRCFWH. Residues 80-100 form a helical membrane-spanning segment; it reads FYFVSLVWNGFLLWILLHLLL. The Cytoplasmic segment spans residues 101–122; that stretch reads QSVPVPEWLQAVLQFLCAGSEP. A helical transmembrane segment spans residues 123-143; it reads QVLGGELSVVLAFSLLWLHSL. Topologically, residues 144–158 are lumenal; sequence RRLLECLFVSIFSNG. The chain crosses the membrane as a helical span at residues 159–179; it reads VIHFVQYCFGLGYYILIGFTI. Residues 180 to 195 lie on the Cytoplasmic side of the membrane; it reads LGYCPLDRRTAVSLDD. Residues 196-216 form a helical membrane-spanning segment; sequence LLMQGNWYHILGLTLYVWASL. Residues 217 to 266 are Lumenal-facing; that stretch reads HQYTCHCILADLRKSASGAIINLKHAVPTGDWFEKVSCPHYFAELLIYLS. The helical transmembrane segment at 267–287 threads the bilayer; it reads IAVVFGLLNTIWWLVVLYVLL. The Cytoplasmic portion of the chain corresponds to 288–319; the sequence is SQALAAVLCHEFYHEKFDSYPIHRKAFIPLIF.

The protein belongs to the steroid 5-alpha reductase family. Polyprenal reductase subfamily.

It localises to the endoplasmic reticulum membrane. The catalysed reaction is a di-trans,poly-cis-dolichal + NADP(+) = a di-trans,poly-cis-polyprenal + NADPH + H(+). It carries out the reaction a 3-oxo-5alpha-steroid + NADP(+) = a 3-oxo-Delta(4)-steroid + NADPH + H(+). It catalyses the reaction androst-4-ene-3,17-dione + NADPH + H(+) = 5alpha-androstan-3,17-dione + NADP(+). The enzyme catalyses 17beta-hydroxy-5alpha-androstan-3-one + NADP(+) = testosterone + NADPH + H(+). It functions in the pathway protein modification; protein glycosylation. Functionally, plays a key role in early steps of protein N-linked glycosylation by being involved in the conversion of polyprenol into dolichol. Acts as a polyprenal reductase that mediates the reduction of polyprenal into dolichal in a NADP-dependent mechanism. Dolichols are required for the synthesis of dolichol-linked monosaccharides and the oligosaccharide precursor used for N-glycosylation. Also able to convert testosterone (T) into 5-alpha-dihydrotestosterone (DHT). This Xenopus laevis (African clawed frog) protein is Polyprenal reductase (srd5a3).